We begin with the raw amino-acid sequence, 348 residues long: Fe(3+) ions import ATP-binding protein FbpC (348 aa).

The ABC transporter domain maps to 6 to 236 (LSLEGATVRF…PADAFVARFL (231 aa)). Residue 38–45 (GPSGSGKS) coordinates ATP.

This sequence belongs to the ABC transporter superfamily. Fe(3+) ion importer (TC 3.A.1.10) family. As to quaternary structure, the complex is composed of two ATP-binding proteins (FbpC), two transmembrane proteins (FbpB) and a solute-binding protein (FbpA).

It is found in the cell membrane. The enzyme catalyses Fe(3+)(out) + ATP + H2O = Fe(3+)(in) + ADP + phosphate + H(+). Its function is as follows. Part of the ABC transporter complex FbpABC involved in Fe(3+) ions import. Responsible for energy coupling to the transport system. The chain is Fe(3+) ions import ATP-binding protein FbpC from Streptomyces coelicolor (strain ATCC BAA-471 / A3(2) / M145).